The primary structure comprises 553 residues: Putative transport protein AHA_3492 (553 aa).

The next 5 helical transmembrane spans lie at 4–24 (IALS…LGNW), 29–49 (VGLG…FAGL), 65–85 (FGLI…FFSS), 95–115 (GFAA…HQLF), and 158–178 (MGYA…MWLI). 2 consecutive RCK C-terminal domains span residues 191-276 (AQFE…VLGE) and 279-361 (ETSL…VVGN). The next 6 helical transmembrane spans lie at 371 to 391 (MLPV…PFYL), 403 to 425 (AGGP…LYWF), 439 to 459 (IVLF…DTLI), 465 to 485 (AWMM…GVLA), 493 to 513 (YLTL…LAFA), and 533 to 553 (LVMF…WAGA).

Belongs to the AAE transporter (TC 2.A.81) family. YidE subfamily.

It is found in the cell membrane. This is Putative transport protein AHA_3492 from Aeromonas hydrophila subsp. hydrophila (strain ATCC 7966 / DSM 30187 / BCRC 13018 / CCUG 14551 / JCM 1027 / KCTC 2358 / NCIMB 9240 / NCTC 8049).